Here is a 264-residue protein sequence, read N- to C-terminus: 3-methyl-2-oxobutanoate hydroxymethyltransferase (264 aa).

Mg(2+) contacts are provided by Asp45 and Asp84. Residues 45–46 (DS), Asp84, and Lys112 each bind 3-methyl-2-oxobutanoate. Glu114 lines the Mg(2+) pocket. Glu181 serves as the catalytic Proton acceptor.

It belongs to the PanB family. As to quaternary structure, homodecamer; pentamer of dimers. It depends on Mg(2+) as a cofactor.

It localises to the cytoplasm. It carries out the reaction 3-methyl-2-oxobutanoate + (6R)-5,10-methylene-5,6,7,8-tetrahydrofolate + H2O = 2-dehydropantoate + (6S)-5,6,7,8-tetrahydrofolate. The protein operates within cofactor biosynthesis; (R)-pantothenate biosynthesis; (R)-pantoate from 3-methyl-2-oxobutanoate: step 1/2. Functionally, catalyzes the reversible reaction in which hydroxymethyl group from 5,10-methylenetetrahydrofolate is transferred onto alpha-ketoisovalerate to form ketopantoate. This is 3-methyl-2-oxobutanoate hydroxymethyltransferase from Shewanella halifaxensis (strain HAW-EB4).